A 490-amino-acid polypeptide reads, in one-letter code: Probable glycine dehydrogenase (decarboxylating) subunit 2 (490 aa).

Position 273 is an N6-(pyridoxal phosphate)lysine (Lys273).

This sequence belongs to the GcvP family. C-terminal subunit subfamily. The glycine cleavage system is composed of four proteins: P, T, L and H. In this organism, the P 'protein' is a heterodimer of two subunits. Pyridoxal 5'-phosphate is required as a cofactor.

It carries out the reaction N(6)-[(R)-lipoyl]-L-lysyl-[glycine-cleavage complex H protein] + glycine + H(+) = N(6)-[(R)-S(8)-aminomethyldihydrolipoyl]-L-lysyl-[glycine-cleavage complex H protein] + CO2. The glycine cleavage system catalyzes the degradation of glycine. The P protein binds the alpha-amino group of glycine through its pyridoxal phosphate cofactor; CO(2) is released and the remaining methylamine moiety is then transferred to the lipoamide cofactor of the H protein. The polypeptide is Probable glycine dehydrogenase (decarboxylating) subunit 2 (Staphylococcus aureus (strain Mu50 / ATCC 700699)).